Consider the following 116-residue polypeptide: UPF0499 protein ATEG_06693 (116 aa).

A signal peptide spans 1–18 (MKLTGLLSLALLTTLALA). Cystine bridges form between C32-C46, C36-C49, and C42-C54.

The protein belongs to the UPF0499 family.

The protein localises to the secreted. This chain is UPF0499 protein ATEG_06693, found in Aspergillus terreus (strain NIH 2624 / FGSC A1156).